A 278-amino-acid chain; its full sequence is Ankyrin repeat and SOCS box protein 13 (278 aa).

ANK repeat units lie at residues 18 to 47 (VERT…CVNQ), 51 to 80 (DSIT…QVDA), 84 to 113 (DGST…KVNP), 116 to 145 (YTAS…NLEA), 149 to 178 (HFGT…NVNA), and 181 to 210 (LHET…NIYA). Residues 229 to 278 (AKCFEYYEKTPLSLSQLCRVSLRKATGVRGLEKVAKLNIPPRLIDYLSYN) form the SOCS box domain.

This sequence belongs to the ankyrin SOCS box (ASB) family.

It participates in protein modification; protein ubiquitination. May be a substrate-recognition component of a SCF-like ECS (Elongin-Cullin-SOCS-box protein) E3 ubiquitin-protein ligase complex which mediates the ubiquitination and subsequent proteasomal degradation of target proteins. The protein is Ankyrin repeat and SOCS box protein 13 (Asb13) of Mus musculus (Mouse).